The chain runs to 430 residues: Adenylosuccinate synthetase (430 aa).

Residues 12-18 and 40-42 contribute to the GTP site; these read GDEGKGK and GHT. Aspartate 13 functions as the Proton acceptor in the catalytic mechanism. Residues aspartate 13 and glycine 40 each coordinate Mg(2+). IMP-binding positions include 13-16, 38-41, threonine 128, arginine 142, glutamine 223, threonine 238, and arginine 302; these read DEGK and NAGH. Catalysis depends on histidine 41, which acts as the Proton donor. 298–304 contacts substrate; the sequence is TTTGRPR. GTP is bound by residues arginine 304, 330-332, and 412-414; these read SID and SVG.

The protein belongs to the adenylosuccinate synthetase family. Homodimer. The cofactor is Mg(2+).

It is found in the cytoplasm. It carries out the reaction IMP + L-aspartate + GTP = N(6)-(1,2-dicarboxyethyl)-AMP + GDP + phosphate + 2 H(+). The protein operates within purine metabolism; AMP biosynthesis via de novo pathway; AMP from IMP: step 1/2. In terms of biological role, plays an important role in the de novo pathway of purine nucleotide biosynthesis. Catalyzes the first committed step in the biosynthesis of AMP from IMP. The chain is Adenylosuccinate synthetase from Exiguobacterium sibiricum (strain DSM 17290 / CCUG 55495 / CIP 109462 / JCM 13490 / 255-15).